Reading from the N-terminus, the 259-residue chain is Deoxyribose-phosphate aldolase (259 aa).

Catalysis depends on Asp102, which acts as the Proton donor/acceptor. Lys167 (schiff-base intermediate with acetaldehyde) is an active-site residue. Residue Lys201 is the Proton donor/acceptor of the active site.

The protein belongs to the DeoC/FbaB aldolase family. DeoC type 2 subfamily.

It localises to the cytoplasm. The enzyme catalyses 2-deoxy-D-ribose 5-phosphate = D-glyceraldehyde 3-phosphate + acetaldehyde. The protein operates within carbohydrate degradation; 2-deoxy-D-ribose 1-phosphate degradation; D-glyceraldehyde 3-phosphate and acetaldehyde from 2-deoxy-alpha-D-ribose 1-phosphate: step 2/2. In terms of biological role, catalyzes a reversible aldol reaction between acetaldehyde and D-glyceraldehyde 3-phosphate to generate 2-deoxy-D-ribose 5-phosphate. This Edwardsiella ictaluri (strain 93-146) protein is Deoxyribose-phosphate aldolase.